The sequence spans 340 residues: CMP-N-acetylneuraminate-beta-galactosamide-alpha-2,3-sialyltransferase 1 (340 aa).

Over 1–13 (MVTLRKRTLKVLT) the chain is Cytoplasmic. A helical; Signal-anchor for type II membrane protein membrane pass occupies residues 14–34 (FLVLFIFLTSFFLNYSHTMVA). At 35–340 (TTWFPKQMVL…INKIRIFKGR (306 aa)) the chain is on the lumenal side. Cystine bridges form between Cys-59–Cys-64, Cys-61–Cys-139, and Cys-142–Cys-281. Asn-79 carries N-linked (GlcNAc...) asparagine glycosylation. Residue Gln-105 coordinates substrate. An N-linked (GlcNAc...) asparagine glycan is attached at Asn-114. Asn-147 and Asn-170 together coordinate substrate. N-linked (GlcNAc...) asparagine glycosylation occurs at Asn-201. Substrate-binding residues include Tyr-230, Tyr-266, Gly-270, Gly-290, His-299, and His-316. The N-linked (GlcNAc...) asparagine glycan is linked to Asn-323.

The protein belongs to the glycosyltransferase 29 family. The soluble form derives from the membrane form by proteolytic processing.

It localises to the golgi apparatus. The protein localises to the golgi stack membrane. The protein resides in the trans-Golgi network membrane. It is found in the secreted. The catalysed reaction is a beta-D-galactosyl-(1-&gt;3)-N-acetyl-alpha-D-galactosaminyl derivative + CMP-N-acetyl-beta-neuraminate = an N-acetyl-alpha-neuraminyl-(2-&gt;3)-beta-D-galactosyl-(1-&gt;3)-N-acetyl-alpha-D-galactosaminyl derivative + CMP + H(+). It catalyses the reaction a ganglioside GM1 + CMP-N-acetyl-beta-neuraminate = a ganglioside GD1a + CMP + H(+). The enzyme catalyses a ganglioside GM1 (d18:1(4E)) + CMP-N-acetyl-beta-neuraminate = a ganglioside GD1a (d18:1(4E)) + CMP + H(+). It carries out the reaction ganglioside GM1 (d18:1(4E)/18:0) + CMP-N-acetyl-beta-neuraminate = ganglioside GD1a (18:1(4E)/18:0) + CMP + H(+). The catalysed reaction is a ganglioside GA1 + CMP-N-acetyl-beta-neuraminate = a ganglioside GM1b + CMP + H(+). It catalyses the reaction a ganglioside GA1 (d18:1(4E)) + CMP-N-acetyl-beta-neuraminate = a ganglioside GM1b (d18:1(4E)) + CMP + H(+). The enzyme catalyses a ganglioside GD1b + CMP-N-acetyl-beta-neuraminate = a ganglioside GT1b + CMP + H(+). It carries out the reaction a 3-O-[beta-D-galactosyl-(1-&gt;3)-N-acetyl-alpha-D-galactosaminyl]-L-threonyl-[protein] + CMP-N-acetyl-beta-neuraminate = a 3-O-[N-acetyl-alpha-neuraminyl-(2-&gt;3)-beta-D-galactosyl-(1-&gt;3)-N-acetyl-alpha-D-galactosaminyl]-L-threonyl-[protein] + CMP + H(+). The catalysed reaction is a 3-O-[beta-D-galactosyl-(1-&gt;3)-N-acetyl-alpha-D-galactosaminyl]-L-seryl-[protein] + CMP-N-acetyl-beta-neuraminate = 3-O-[N-acetyl-alpha-neuraminyl-(2-&gt;3)-beta-D-galactosyl-(1-&gt;3)-N-acetyl-alpha-D-galactosaminyl]-L-seryl-[protein] + CMP + H(+). The protein operates within protein modification; protein glycosylation. Its pathway is glycolipid biosynthesis. In terms of biological role, a beta-galactoside alpha2-&gt;3 sialyltransferase involved in terminal sialylation of glycoproteins and glycolipids. Catalyzes the transfer of sialic acid (N-acetyl-neuraminic acid; Neu5Ac) from the nucleotide sugar donor CMP-Neu5Ac onto acceptor Galbeta-(1-&gt;3)-GalNAc-terminated glycoconjugates through an alpha2-3 linkage. Adds sialic acid to the core 1 O-glycan, Galbeta-(1-&gt;3)-GalNAc-O-Ser/Thr, which is a major structure of mucin-type O-glycans. As part of a homeostatic mechanism that regulates CD8-positive T cell numbers, sialylates core 1 O-glycans of T cell glycoproteins, SPN/CD43 and PTPRC/CD45. Prevents premature apoptosis of thymic CD8-positive T cells prior to peripheral emigration, whereas in the secondary lymphoid organs controls the survival of CD8-positive memory T cells generated following a successful immune response. Transfers sialic acid to asialofetuin, presumably onto Galbeta-(1-&gt;3)-GalNAc-O-Ser. Sialylates GM1a, GA1 and GD1b gangliosides to form GD1a, GM1b and GT1b, respectively. This Pan troglodytes (Chimpanzee) protein is CMP-N-acetylneuraminate-beta-galactosamide-alpha-2,3-sialyltransferase 1 (ST3GAL1).